Consider the following 341-residue polypeptide: ATPase GET3 (341 aa).

Residue 34–41 (KGGVGKTT) coordinates ATP. Asp63 is a catalytic residue. Glu245 and Asn272 together coordinate ATP. Zn(2+) contacts are provided by Cys283 and Cys286.

The protein belongs to the arsA ATPase family. Homodimer.

The protein localises to the cytoplasm. The protein resides in the endoplasmic reticulum. In terms of biological role, ATPase required for the post-translational delivery of tail-anchored (TA) proteins to the endoplasmic reticulum. Recognizes and selectively binds the transmembrane domain of TA proteins in the cytosol. This complex then targets to the endoplasmic reticulum by membrane-bound receptors, where the tail-anchored protein is released for insertion. This process is regulated by ATP binding and hydrolysis. ATP binding drives the homodimer towards the closed dimer state, facilitating recognition of newly synthesized TA membrane proteins. ATP hydrolysis is required for insertion. Subsequently, the homodimer reverts towards the open dimer state, lowering its affinity for the membrane-bound receptor, and returning it to the cytosol to initiate a new round of targeting. The sequence is that of ATPase GET3 from Ajellomyces capsulatus (strain H143) (Darling's disease fungus).